The following is a 141-amino-acid chain: MILMNLIEALTNPDTFFKKLSQKEISLKEPFLIVLIFSILIAISAYISTSIIYKIFPPQYQQVLAFTKIIALISTFIGGIVAWLIIAGFMHLISMIFKGEGSFKKTLSFTGYGFLPNIVGALITIPIAYYMREISQQEMRL.

Helical transmembrane passes span 32–52 (LIVLIFSILIAISAYISTSII), 69–89 (IIALISTFIGGIVAWLIIAGF), and 109–129 (FTGYGFLPNIVGALITIPIAY).

It localises to the cell membrane. This is an uncharacterized protein from Methanocaldococcus jannaschii (strain ATCC 43067 / DSM 2661 / JAL-1 / JCM 10045 / NBRC 100440) (Methanococcus jannaschii).